The sequence spans 294 residues: Probable endonuclease 4 (294 aa).

Zn(2+) contacts are provided by His-71, His-111, Glu-148, Asp-182, His-185, His-217, Asp-230, His-232, and Glu-262.

Belongs to the AP endonuclease 2 family. The cofactor is Zn(2+).

It carries out the reaction Endonucleolytic cleavage to 5'-phosphooligonucleotide end-products.. Functionally, endonuclease IV plays a role in DNA repair. It cleaves phosphodiester bonds at apurinic or apyrimidinic (AP) sites, generating a 3'-hydroxyl group and a 5'-terminal sugar phosphate. The polypeptide is Probable endonuclease 4 (Acholeplasma laidlawii (strain PG-8A)).